A 195-amino-acid chain; its full sequence is uncharacterized protein (195 aa).

The signal sequence occupies residues 1 to 20; the sequence is MLKFRLILTVLTVLLITVNG. The interval 26–195 is disordered; it reads IENKSSTSSS…LHNQYPPQQN (170 aa). An N-linked (GlcNAc...) asparagine glycan is attached at asparagine 28. 2 stretches are compositionally biased toward low complexity: residues 29 to 43 and 74 to 104; these read KSSTSSSKSAASKPS and QSKTAQAQPQPSAQSTNKPSFQNGQQSGGNQ. Polar residues-rich tracts occupy residues 112-123 and 151-176; these read DPYQTGSYQGPY and PKNTVQSGYQQPMPGQQSMQVPNNGP.

Component of the acid-soluble organic matrix of calcified layers of the shell (at protein level).

Its subcellular location is the secreted. This is an uncharacterized protein from Lottia gigantea (Giant owl limpet).